The chain runs to 363 residues: Trichocyst matrix protein T4-A (363 aa).

Residues 1-17 (MARSLTILAIVFAVATA) form the signal peptide. Residues 18 to 52 (RVTKSESPKEILAQVNKDSFGNSILSVLQLQLATG) constitute a propeptide that is removed on maturation. The stretch at 85–119 (VAFEKIIADLEQEIAYHQTQIVALSNLRDSTTEAL) forms a coiled coil. Positions 190–221 (RFEKVQAKLMESKHALFKPLINALTQLASKVD) are excised as a propeptide. The stretch at 244-352 (ASLLATEERQ…EVLTQKLSAA (109 aa)) forms a coiled coil.

The protein belongs to the TMP family. Post-translationally, two components are produced by post-translational processing from the precursor peptide.

It is found in the trichocyst. Functionally, structural protein that crystallize inside the trichocyst matrix. In Paramecium tetraurelia, this protein is Trichocyst matrix protein T4-A (T4A).